The chain runs to 662 residues: DNA ligase (662 aa).

NAD(+) contacts are provided by residues 31–35 (DKDYD) and 79–80 (SL). Lys121 acts as the N6-AMP-lysine intermediate in catalysis. NAD(+) is bound by residues Arg143, Glu177, and Lys313. Zn(2+) is bound by residues Cys406, Cys409, Cys422, and Cys428. Residues 586–662 (VLESPFMGKT…LSEEEFENMI (77 aa)) form the BRCT domain.

The protein belongs to the NAD-dependent DNA ligase family. LigA subfamily. The cofactor is Mg(2+). Mn(2+) serves as cofactor.

It carries out the reaction NAD(+) + (deoxyribonucleotide)n-3'-hydroxyl + 5'-phospho-(deoxyribonucleotide)m = (deoxyribonucleotide)n+m + AMP + beta-nicotinamide D-nucleotide.. In terms of biological role, DNA ligase that catalyzes the formation of phosphodiester linkages between 5'-phosphoryl and 3'-hydroxyl groups in double-stranded DNA using NAD as a coenzyme and as the energy source for the reaction. It is essential for DNA replication and repair of damaged DNA. This Clostridium perfringens (strain SM101 / Type A) protein is DNA ligase.